The primary structure comprises 95 residues: Cliotide T5 (95 aa).

A cross-link (cyclopeptide (Gly-Asn)) is located at residues 1–30 (GIPCGESCVFIPCISTVIGCSCKNKVCYRN). Cystine bridges form between Cys-4–Cys-20, Cys-8–Cys-22, and Cys-13–Cys-27. The propeptide at 31 to 95 (HVIAAEAKTM…KDHLKMSITN (65 aa)) is removed in mature form.

In terms of processing, contains 3 disulfide bonds. This is a cyclic peptide. Expressed in stem, shoot, root, leaf, pod and nodule but not in flower and seed (at protein level).

Its function is as follows. Probably participates in a plant defense mechanism. The chain is Cliotide T5 from Clitoria ternatea (Butterfly pea).